A 691-amino-acid polypeptide reads, in one-letter code: Alpha-1,4-glucan:maltose-1-phosphate maltosyltransferase (691 aa).

Alpha-maltose 1-phosphate contacts are provided by Lys-280, Gln-341, and Asp-376. The active-site Nucleophile is the Asp-411. Asn-412 lines the alpha-maltose 1-phosphate pocket. The active-site Proton donor is Glu-440. Position 550–551 (550–551 (KY)) interacts with alpha-maltose 1-phosphate.

It belongs to the glycosyl hydrolase 13 family. GlgE subfamily. As to quaternary structure, homodimer.

The catalysed reaction is alpha-maltose 1-phosphate + [(1-&gt;4)-alpha-D-glucosyl](n) = [(1-&gt;4)-alpha-D-glucosyl](n+2) + phosphate. Its function is as follows. Maltosyltransferase that uses maltose 1-phosphate (M1P) as the sugar donor to elongate linear or branched alpha-(1-&gt;4)-glucans. Is involved in a branched alpha-glucan biosynthetic pathway from trehalose, together with TreS, Mak and GlgB. The chain is Alpha-1,4-glucan:maltose-1-phosphate maltosyltransferase from Arcanobacterium haemolyticum (strain ATCC 9345 / DSM 20595 / CCM 5947 / CCUG 17215 / LMG 16163 / NBRC 15585 / NCTC 8452 / 11018).